An 84-amino-acid chain; its full sequence is UPF0248 protein PF1300 (84 aa).

Belongs to the UPF0248 family.

This chain is UPF0248 protein PF1300, found in Pyrococcus furiosus (strain ATCC 43587 / DSM 3638 / JCM 8422 / Vc1).